The chain runs to 384 residues: Putative exopolyphosphatase (384 aa).

Mn(2+) contacts are provided by D40, D42, D116, H138, and D200.

Belongs to the PPase class C family. Mn(2+) is required as a cofactor.

It carries out the reaction [phosphate](n) + H2O = [phosphate](n-1) + phosphate + H(+). Degradation of inorganic polyphosphates. The sequence is that of Putative exopolyphosphatase from Schizosaccharomyces pombe (strain 972 / ATCC 24843) (Fission yeast).